The chain runs to 429 residues: Formate-dependent phosphoribosylglycinamide formyltransferase (429 aa).

Residues 26–27 (EL) and Glu86 each bind N(1)-(5-phospho-beta-D-ribosyl)glycinamide. ATP is bound by residues Arg118, Lys159, 199–202 (EEHI), and Glu207. Residues 123 to 319 (ETLVKEAKVP…EFGLHLRAVL (197 aa)) enclose the ATP-grasp domain. Residues Glu276 and Glu288 each contribute to the Mg(2+) site. Residues Asp295, Lys375, and 382-383 (RR) contribute to the N(1)-(5-phospho-beta-D-ribosyl)glycinamide site.

Belongs to the PurK/PurT family. In terms of assembly, homodimer.

The enzyme catalyses N(1)-(5-phospho-beta-D-ribosyl)glycinamide + formate + ATP = N(2)-formyl-N(1)-(5-phospho-beta-D-ribosyl)glycinamide + ADP + phosphate + H(+). Its pathway is purine metabolism; IMP biosynthesis via de novo pathway; N(2)-formyl-N(1)-(5-phospho-D-ribosyl)glycinamide from N(1)-(5-phospho-D-ribosyl)glycinamide (formate route): step 1/1. In terms of biological role, involved in the de novo purine biosynthesis. Catalyzes the transfer of formate to 5-phospho-ribosyl-glycinamide (GAR), producing 5-phospho-ribosyl-N-formylglycinamide (FGAR). Formate is provided by PurU via hydrolysis of 10-formyl-tetrahydrofolate. The sequence is that of Formate-dependent phosphoribosylglycinamide formyltransferase from Pyrococcus furiosus (strain ATCC 43587 / DSM 3638 / JCM 8422 / Vc1).